The following is a 291-amino-acid chain: Tobamovirus multiplication protein 1 (291 aa).

Residues 1-3 lie on the Cytoplasmic side of the membrane; sequence MTD. The chain crosses the membrane as a helical span at residues 4–24; sequence SGLMMPAEIAGILTTAITSWW. The Extracellular segment spans residues 25-36; it reads DDVNESTQWQDG. A glycan (N-linked (GlcNAc...) asparagine) is linked at Asn-28. A helical membrane pass occupies residues 37–57; it reads IFFALCGAYALVSAVALVQLI. The Cytoplasmic segment spans residues 58–78; that stretch reads RIQMRVPEYGWTTQKVFHLMN. Residues 79–99 traverse the membrane as a helical segment; it reads FVVNGVRAVLFGFHMQVFLVH. Over 100–104 the chain is Extracellular; sequence PKALC. The chain crosses the membrane as a helical span at residues 105 to 125; that stretch reads WVLLDLPGLLFFSAYTLLVLF. At 126–144 the chain is on the cytoplasmic side; that stretch reads WAEIYHQARSLPTDKLRIT. Residues 145 to 165 traverse the membrane as a helical segment; it reads YISVNVAVYLAQIGIWAYIWV. The Extracellular segment spans residues 166 to 172; it reads HDNSTVE. A glycan (N-linked (GlcNAc...) asparagine) is linked at Asn-168. A helical transmembrane segment spans residues 173 to 193; it reads LVGKIFIAVVSFIAALGFLLY. Over 194-220 the chain is Cytoplasmic; that stretch reads GGRLFFMLRRFPIESKGRRKKLHEVGS. The chain crosses the membrane as a helical span at residues 221 to 241; it reads VTAICFTCFLIRCVVVAVSAF. Topologically, residues 242-253 are extracellular; it reads DKDLTLDVLDHP. Residues 254 to 274 traverse the membrane as a helical segment; that stretch reads VLNLIYYMVVEVLPSALVLFI. At 275 to 291 the chain is on the cytoplasmic side; sequence LRKLPPKRVSAQYHPIQ.

The protein belongs to the plant tobamovirus multiplication TOM1 protein family. As to quaternary structure, constituent of tobamovirus replication complex. Interacts with TOM2A and with the helicase domain of tobamovirus-encoded replication proteins.

It localises to the vacuole membrane. Functionally, necessary for the efficient intracellular multiplication of tobamoviruses, probably being a membrane anchor promoting the formation of the replication complex. The sequence is that of Tobamovirus multiplication protein 1 (TOM1) from Arabidopsis thaliana (Mouse-ear cress).